Here is a 748-residue protein sequence, read N- to C-terminus: MALSLEAYEQDIDELISDEKSCCLDVTDSSDVEGDELNDLELNPFDGLPYSSRFYKLLKERETLPIWKIKYDFLEHLAHNQIVVVSAGPKSGKSSQIPQWCAEYCLAGHYQHGAVVCTQAHKQTAVWLAMRVADEMDVNIGHEVGYIVPFENCCTSETILRYCTDEMLRREMMSNPLLSSYGVVIIDDVYERFVSTDVLLSFLKVIAVSRPELKVVIITCPSLSGTLVSYYGNAPLVEAENTHSVESVYTTSLPRDYFHSALRLLFEIHHTKEKGDIVVFLACEEEIKRAYEHIKQEALHMNPELGELMPIALYPHQSISDYIPYEELDDNSKNPKRKVVLTTSLGESLIWMKNIFFVIDVGIEKRKVYNTRIRAESLVTQPISKVRAKMRKHILSSSSEGKLFCLYPEDFAHEMKPFLTAKVEECNLISMVLFLKRMDIAGLAHCDFINRPDPESLMQALEDLDYLAALDNDGNLSEFGIIMSEFPLDPQLSKSILAACEFDCVDEMLTLAAMVTAPNCFIDLPPEAKELDLIGKGKFFHPEGDHFTLINIYNEYEQMKRNNASQYDVEKWCQNHCLSFVALEMARAIRNELLDIMRRIELPLTGPAFGSDENVTNIKKSLLSGYFMQIARDVDGLGNYIMLTHKQVGQLHPDSGFCNSAKVPEWVLFHEFSVSERSCIRIVSEISPNLFMEFVPPYYFSNLPPSETKDLLQQDQTPDTPPTEEPREEEPLHEANDEGTAEQRCIIQ.

In terms of domain architecture, Helicase ATP-binding spans 74-240 (LEHLAHNQIV…YGNAPLVEAE (167 aa)). Residue 87 to 94 (AGPKSGKS) coordinates ATP. One can recognise a Helicase C-terminal domain in the interval 263 to 439 (RLLFEIHHTK…SMVLFLKRMD (177 aa)). Positions 706-748 (SETKDLLQQDQTPDTPPTEEPREEEPLHEANDEGTAEQRCIIQ) are disordered.

This sequence belongs to the DEAD box helicase family. DEAH subfamily.

It localises to the nucleus. It is found in the mitochondrion. It carries out the reaction ATP + H2O = ADP + phosphate + H(+). The protein is Putative pre-mRNA-splicing factor ATP-dependent RNA helicase DHX32 (dhx32) of Xenopus laevis (African clawed frog).